The primary structure comprises 262 residues: Acyl-[acyl-carrier-protein]--UDP-N-acetylglucosamine O-acyltransferase (262 aa).

Belongs to the transferase hexapeptide repeat family. LpxA subfamily. As to quaternary structure, homotrimer.

It localises to the cytoplasm. The catalysed reaction is a (3R)-hydroxyacyl-[ACP] + UDP-N-acetyl-alpha-D-glucosamine = a UDP-3-O-[(3R)-3-hydroxyacyl]-N-acetyl-alpha-D-glucosamine + holo-[ACP]. It participates in glycolipid biosynthesis; lipid IV(A) biosynthesis; lipid IV(A) from (3R)-3-hydroxytetradecanoyl-[acyl-carrier-protein] and UDP-N-acetyl-alpha-D-glucosamine: step 1/6. Its function is as follows. Involved in the biosynthesis of lipid A, a phosphorylated glycolipid that anchors the lipopolysaccharide to the outer membrane of the cell. In Burkholderia ambifaria (strain ATCC BAA-244 / DSM 16087 / CCUG 44356 / LMG 19182 / AMMD) (Burkholderia cepacia (strain AMMD)), this protein is Acyl-[acyl-carrier-protein]--UDP-N-acetylglucosamine O-acyltransferase.